Here is a 294-residue protein sequence, read N- to C-terminus: N-acetylmuramic acid 6-phosphate etherase (294 aa).

Residues 54–217 (VIKSFEEEGR…STASMIGVGK (164 aa)) form the SIS domain. The Proton donor role is filled by glutamate 82. Glutamate 113 is an active-site residue.

Belongs to the GCKR-like family. MurNAc-6-P etherase subfamily. In terms of assembly, homodimer.

It catalyses the reaction N-acetyl-D-muramate 6-phosphate + H2O = N-acetyl-D-glucosamine 6-phosphate + (R)-lactate. The protein operates within amino-sugar metabolism; N-acetylmuramate degradation. Specifically catalyzes the cleavage of the D-lactyl ether substituent of MurNAc 6-phosphate, producing GlcNAc 6-phosphate and D-lactate. In Bacillus cereus (strain ATCC 14579 / DSM 31 / CCUG 7414 / JCM 2152 / NBRC 15305 / NCIMB 9373 / NCTC 2599 / NRRL B-3711), this protein is N-acetylmuramic acid 6-phosphate etherase.